The chain runs to 358 residues: UDP-N-acetylglucosamine--N-acetylmuramyl-(pentapeptide) pyrophosphoryl-undecaprenol N-acetylglucosamine transferase (358 aa).

UDP-N-acetyl-alpha-D-glucosamine contacts are provided by residues T11–G13, N122, R161, S189, I243, A262–E267, and Q288.

It belongs to the glycosyltransferase 28 family. MurG subfamily.

The protein localises to the cell inner membrane. The enzyme catalyses di-trans,octa-cis-undecaprenyl diphospho-N-acetyl-alpha-D-muramoyl-L-alanyl-D-glutamyl-meso-2,6-diaminopimeloyl-D-alanyl-D-alanine + UDP-N-acetyl-alpha-D-glucosamine = di-trans,octa-cis-undecaprenyl diphospho-[N-acetyl-alpha-D-glucosaminyl-(1-&gt;4)]-N-acetyl-alpha-D-muramoyl-L-alanyl-D-glutamyl-meso-2,6-diaminopimeloyl-D-alanyl-D-alanine + UDP + H(+). The protein operates within cell wall biogenesis; peptidoglycan biosynthesis. Cell wall formation. Catalyzes the transfer of a GlcNAc subunit on undecaprenyl-pyrophosphoryl-MurNAc-pentapeptide (lipid intermediate I) to form undecaprenyl-pyrophosphoryl-MurNAc-(pentapeptide)GlcNAc (lipid intermediate II). This is UDP-N-acetylglucosamine--N-acetylmuramyl-(pentapeptide) pyrophosphoryl-undecaprenol N-acetylglucosamine transferase from Coxiella burnetii (strain Dugway 5J108-111).